The primary structure comprises 330 residues: D-lactate dehydrogenase (330 aa).

Residues 155-156, Asp175, 206-207, Asn212, 233-235, and Asp259 each bind NAD(+); these read RI, MP, and MAR. Residue Arg235 is part of the active site. Glu264 is a catalytic residue. The Proton donor role is filled by His296.

The protein belongs to the D-isomer specific 2-hydroxyacid dehydrogenase family.

It carries out the reaction (R)-lactate + NAD(+) = pyruvate + NADH + H(+). The polypeptide is D-lactate dehydrogenase (ldhD) (Streptococcus agalactiae serotype V (strain ATCC BAA-611 / 2603 V/R)).